The chain runs to 250 residues: MAVTKLVLVRHGESQWNNENRFTGWYDVDLSEKGRSEAKAAGKLLKDEGFTFDFAYTSVLKRAIHTLWNILDELDQAWLPTEKTWKLNERHYGALQGLNKSETAEKYGDEQVKQWRRGFAITPPALEKSDERFPGHDPRYAKLTDAELPTTESLALTIERVIPYWNDVIKPRIASGERVIIAAHGNSLRALVKYLDDLGEDEILELNIPTGVPLVYEFDENFKPIKHYYLGNADEIAAKAAAVANQGKAK.

Residues 10–17, 23–24, R62, 89–92, K100, 116–117, and 185–186 each bind substrate; these read RHGESQWN, TG, ERHY, RR, and GN. Catalysis depends on H11, which acts as the Tele-phosphohistidine intermediate. E89 serves as the catalytic Proton donor/acceptor.

The protein belongs to the phosphoglycerate mutase family. BPG-dependent PGAM subfamily. In terms of assembly, homodimer.

It carries out the reaction (2R)-2-phosphoglycerate = (2R)-3-phosphoglycerate. It functions in the pathway carbohydrate degradation; glycolysis; pyruvate from D-glyceraldehyde 3-phosphate: step 3/5. Functionally, catalyzes the interconversion of 2-phosphoglycerate and 3-phosphoglycerate. This Yersinia pseudotuberculosis serotype IB (strain PB1/+) protein is 2,3-bisphosphoglycerate-dependent phosphoglycerate mutase.